Reading from the N-terminus, the 201-residue chain is Recombination protein RecR (201 aa).

Residues 57–72 (CKYCSNFGNKDECDIC) form a C4-type zinc finger. The region spanning 80 to 176 (TKLMIVTTNE…QIYRIGFGIP (97 aa)) is the Toprim domain.

The protein belongs to the RecR family.

May play a role in DNA repair. It seems to be involved in an RecBC-independent recombinational process of DNA repair. It may act with RecF and RecO. The polypeptide is Recombination protein RecR (Ureaplasma urealyticum serovar 10 (strain ATCC 33699 / Western)).